A 164-amino-acid polypeptide reads, in one-letter code: UPF0304 protein YfbU (164 aa).

The protein belongs to the UPF0304 family.

The polypeptide is UPF0304 protein YfbU (Shigella flexneri).